The chain runs to 322 residues: Lactamase-like protein nscB (322 aa).

Positions 97, 99, 101, and 102 each coordinate Zn(2+). Residue Asp101 is the Proton donor/acceptor of the active site.

The protein belongs to the metallo-beta-lactamase superfamily. Requires Zn(2+) as cofactor.

It functions in the pathway secondary metabolite biosynthesis. In terms of biological role, lactamase-like protein; part of the gene cluster that mediates the biosynthesis of neosartoricin B, a prenylated anthracenone that probably exhibits T-cell antiproliferative activity, suggestive of a physiological role as an immunosuppressive agent. The non-reducing polyketide synthase nscA probably synthesizes and cyclizes the decaketide backbone. The hydrolase nscB then mediates the product release through hydrolysis followed by spontaneous decarboxylation. The prenyltransferase nscD catalyzes the addition of the dimethylallyl group to the aromatic C5. The FAD-dependent monooxygenase nscC is then responsible for the stereospecific hydroxylation at C2. Neosartoricin B can be converted into two additional compounds neosartoricins C and D. Neosartoricin C is a spirocyclic compound that is cyclized through the attack of C3 hydroxyl on C14, followed by dehydration. On the other hand, neosartoricin D is a further cyclized compound in which attack of C2 on C14 in neosartoricin C results in the formation of the acetal-containing dioxabicyclo-octanone ring. Both of these compounds are novel and possibly represent related metabolites of the gene cluster. The sequence is that of Lactamase-like protein nscB from Trichophyton rubrum (strain ATCC MYA-4607 / CBS 118892) (Athlete's foot fungus).